A 521-amino-acid chain; its full sequence is GMC-type oxidoreductase acuG (521 aa).

FAD-binding positions include 14-15 (TV), 34-35 (EA), Leu82, 90-93 (NYGL), Ala492, and 503-504 (YQ).

The protein belongs to the GMC oxidoreductase family. It depends on FAD as a cofactor.

The protein operates within secondary metabolite biosynthesis. GMC-type oxidoreductase; part of the gene cluster that mediates the biosynthesis of aculins. The pathway begins with the synthesis of 6-methylsalicylic acid by the polyketide synthase (PKS) acuA via condensation of acetate and malonate units. The 6-methylsalicylic acid decarboxylase acuB then catalyzes the decarboxylation of 6-methylsalicylic acid to yield m-cresol (also known as 3-methylphenol). These first reactions occur in the cytosol. The intermediate m-cresol is then transported into the endoplasmic reticulum where the cytochrome P450 monooxygenase acuC converts it to m-hydroxybenzyl alcohol, which is further converted to gentisyl alcohol by the cytochrome P450 monooxygenase acuD. Gentisyl alcohol is further oxidized by the oxidoreductase acuE that probably catalyzes hydroxylation of the aromatic ring. The aromatic system might then be opened by oxidation through a Baeyer-Villiger type of oxidation, which could be catalyzed by acuF, with the carboxylic acid at C-1 subsequently reduced to an aldehyde by acuG. Subsequently, a hemiacetal is formed, before the dehydrogenase acuH would reduce the double bond between C-4 and C-6. Finally, keto-enol tautomerism results in formation of aculinic acid, which exists as two diastereomers (both R/S configurations at C-1) by non-enzymatic hemiacetal formation. The carboxypeptidase acuI could be involved in the linking of aculinic acid to an aculene A moiety produced by the aculene biosynthesis cluster and which leads to the production of aculin A. AcuI may also be involved in the attachment of proline to aculinic acid to form epi-aculins A and B. This Aspergillus aculeatus (strain ATCC 16872 / CBS 172.66 / WB 5094) protein is GMC-type oxidoreductase acuG.